We begin with the raw amino-acid sequence, 416 residues long: Phosphoglycerate kinase (416 aa).

The (2R)-3-phosphoglycerate site is built by Val23, Asp24, Phe25, Asn26, Gln38, Arg39, Ser62, His63, Gly65, Arg66, Leu121, Arg122, His169, and Arg170. Gly213 contacts ADP. Gly213 serves as a coordination point for CDP. AMP-binding residues include Ala214 and Lys215. Ala214 contacts ATP. Ala214 serves as a coordination point for Mg(2+). Asp218 provides a ligand contact to CDP. Residue Asp218 coordinates Mg(2+). AMP is bound at residue Lys219. Lys219 provides a ligand contact to ATP. Residue Gly237 participates in ADP binding. Gly237 lines the CDP pocket. Residues Gly238 and Gly312 each coordinate AMP. Residues Gly238 and Gly312 each coordinate ATP. Gly337, Ala339, and Phe342 together coordinate CDP. Position 342 (Phe342) interacts with ADP. Glu343 contacts AMP. Residues Glu343, Asp374, and Thr375 each contribute to the ATP site. Asp374 lines the Mg(2+) pocket.

This sequence belongs to the phosphoglycerate kinase family. As to quaternary structure, monomer. Requires Mg(2+) as cofactor.

The protein resides in the cytoplasm. It localises to the mitochondrion. It catalyses the reaction (2R)-3-phosphoglycerate + ATP = (2R)-3-phospho-glyceroyl phosphate + ADP. It functions in the pathway carbohydrate degradation; glycolysis; pyruvate from D-glyceraldehyde 3-phosphate: step 2/5. In terms of biological role, catalyzes one of the two ATP producing reactions in the glycolytic pathway via the reversible conversion of 1,3-diphosphoglycerate to 3-phosphoglycerate. Both L- and D- forms of purine and pyrimidine nucleotides can be used as substrates, but the activity is much lower on pyrimidines. Negatively regulates the biosynthesis of acetyl-CoA from pyruvate in the mitochondrion. This Funneliformis mosseae (Endomycorrhizal fungus) protein is Phosphoglycerate kinase (PGK).